The following is a 229-amino-acid chain: Large ribosomal subunit protein uL1 (229 aa).

The protein belongs to the universal ribosomal protein uL1 family. Part of the 50S ribosomal subunit.

In terms of biological role, binds directly to 23S rRNA. The L1 stalk is quite mobile in the ribosome, and is involved in E site tRNA release. Functionally, protein L1 is also a translational repressor protein, it controls the translation of the L11 operon by binding to its mRNA. The chain is Large ribosomal subunit protein uL1 from Gemmatimonas aurantiaca (strain DSM 14586 / JCM 11422 / NBRC 100505 / T-27).